Here is a 445-residue protein sequence, read N- to C-terminus: Proline--tRNA ligase (445 aa).

This sequence belongs to the class-II aminoacyl-tRNA synthetase family. ProS type 2 subfamily. In terms of assembly, homodimer.

The protein localises to the cytoplasm. The catalysed reaction is tRNA(Pro) + L-proline + ATP = L-prolyl-tRNA(Pro) + AMP + diphosphate. In terms of biological role, catalyzes the attachment of proline to tRNA(Pro) in a two-step reaction: proline is first activated by ATP to form Pro-AMP and then transferred to the acceptor end of tRNA(Pro). This chain is Proline--tRNA ligase, found in Cereibacter sphaeroides (strain ATCC 17023 / DSM 158 / JCM 6121 / CCUG 31486 / LMG 2827 / NBRC 12203 / NCIMB 8253 / ATH 2.4.1.) (Rhodobacter sphaeroides).